Reading from the N-terminus, the 322-residue chain is Deoxyhypusine hydroxylase (322 aa).

2 HEAT-like PBS-type repeats span residues 76-102 and 109-135; these read LKHE…VLAD and VRHE…YFKE. Fe cation contacts are provided by histidine 78, glutamate 79, histidine 111, glutamate 112, histidine 236, glutamate 237, histidine 269, and glutamate 270. An HEAT-like PBS-type 3 repeat occupies 267–293; sequence VRHEAAEALGSIATDDVLPVLKEHLKD.

Belongs to the deoxyhypusine hydroxylase family. Fe(2+) serves as cofactor.

The protein resides in the cytoplasm. It is found in the nucleus. It carries out the reaction [eIF5A protein]-deoxyhypusine + AH2 + O2 = [eIF5A protein]-hypusine + A + H2O. The protein operates within protein modification; eIF5A hypusination. Its function is as follows. Catalyzes the hydroxylation of the N(6)-(4-aminobutyl)-L-lysine intermediate to form hypusine, an essential post-translational modification only found in mature eIF-5A factor. The sequence is that of Deoxyhypusine hydroxylase from Kluyveromyces lactis (strain ATCC 8585 / CBS 2359 / DSM 70799 / NBRC 1267 / NRRL Y-1140 / WM37) (Yeast).